Consider the following 320-residue polypeptide: TPR repeat-containing protein MJ0263 (320 aa).

9 TPR repeats span residues 12 to 45 (ILKDVVNALECADKGNFDKALEYLEKAQKVDKDN), 46 to 79 (PLVLYVKGIVLKLKGDMEKAEKYFECLENIEGTS), 80 to 113 (LLSLGNLICLTFVKGEYERTLKYIEKLSRLSKPC), 114 to 147 (YLSPFHKALIYIEFGEFEKALEALDEFLKIYPNL), 148 to 181 (TSILRQKASILEILGKLDEALDCVNKILSIKKDD), 182 to 215 (AHAWYLKGRILKKLGNIKEALDALKMAINLNENL), 216 to 249 (VHVYKDIAYLELANNNYEEALNYITKYLEKFPND), 250 to 283 (VEAKFYLALIYENLNKVDDALKIYDKIISNKNVK), and 289 to 320 (KSSILNKARILEKLGKIEEAVETYNKAFDNNI).

This is TPR repeat-containing protein MJ0263 from Methanocaldococcus jannaschii (strain ATCC 43067 / DSM 2661 / JAL-1 / JCM 10045 / NBRC 100440) (Methanococcus jannaschii).